A 1182-amino-acid polypeptide reads, in one-letter code: DNA-directed RNA polymerase subunit beta' (1182 aa).

Cysteine 59, cysteine 61, cysteine 74, and cysteine 77 together coordinate Zn(2+). Residues aspartate 449, aspartate 451, and aspartate 453 each coordinate Mg(2+). Residues cysteine 794, cysteine 868, cysteine 875, and cysteine 878 each coordinate Zn(2+).

It belongs to the RNA polymerase beta' chain family. The RNAP catalytic core consists of 2 alpha, 1 beta, 1 beta' and 1 omega subunit. When a sigma factor is associated with the core the holoenzyme is formed, which can initiate transcription. Mg(2+) is required as a cofactor. It depends on Zn(2+) as a cofactor.

The catalysed reaction is RNA(n) + a ribonucleoside 5'-triphosphate = RNA(n+1) + diphosphate. DNA-dependent RNA polymerase catalyzes the transcription of DNA into RNA using the four ribonucleoside triphosphates as substrates. This is DNA-directed RNA polymerase subunit beta' from Clostridium acetobutylicum (strain ATCC 824 / DSM 792 / JCM 1419 / IAM 19013 / LMG 5710 / NBRC 13948 / NRRL B-527 / VKM B-1787 / 2291 / W).